The sequence spans 286 residues: Co-chaperone protein DjlA (286 aa).

The Periplasmic segment spans residues 1–6 (MQFIGK). Residues 7–31 (IIGFFIGYKLFGGLFGGLLGIFIGH) traverse the membrane as a helical segment. The Cytoplasmic portion of the chain corresponds to 32–286 (LADKKLYELG…DLICKTKGWK (255 aa)). Residues 220-286 (DAYTVLGINE…DLICKTKGWK (67 aa)) form the J domain.

Homodimer.

Its subcellular location is the cell inner membrane. Regulatory DnaK co-chaperone. Direct interaction between DnaK and DjlA is needed for the induction of the wcaABCDE operon, involved in the synthesis of a colanic acid polysaccharide capsule, possibly through activation of the RcsB/RcsC phosphotransfer signaling pathway. The colanic acid capsule may help the bacterium survive conditions outside the host. In Haemophilus ducreyi (strain 35000HP / ATCC 700724), this protein is Co-chaperone protein DjlA.